We begin with the raw amino-acid sequence, 164 residues long: Large ribosomal subunit protein bL9 (164 aa).

It belongs to the bacterial ribosomal protein bL9 family.

Binds to the 23S rRNA. The protein is Large ribosomal subunit protein bL9 of Borrelia duttonii (strain Ly).